Consider the following 329-residue polypeptide: Phosphate acyltransferase (329 aa).

This sequence belongs to the PlsX family. In terms of assembly, homodimer. Probably interacts with PlsY.

Its subcellular location is the cytoplasm. It carries out the reaction a fatty acyl-[ACP] + phosphate = an acyl phosphate + holo-[ACP]. Its pathway is lipid metabolism; phospholipid metabolism. Catalyzes the reversible formation of acyl-phosphate (acyl-PO(4)) from acyl-[acyl-carrier-protein] (acyl-ACP). This enzyme utilizes acyl-ACP as fatty acyl donor, but not acyl-CoA. The sequence is that of Phosphate acyltransferase from Sulfurovum sp. (strain NBC37-1).